The following is a 423-amino-acid chain: Gamma-glutamyl phosphate reductase (423 aa).

Belongs to the gamma-glutamyl phosphate reductase family.

It is found in the cytoplasm. It catalyses the reaction L-glutamate 5-semialdehyde + phosphate + NADP(+) = L-glutamyl 5-phosphate + NADPH + H(+). It participates in amino-acid biosynthesis; L-proline biosynthesis; L-glutamate 5-semialdehyde from L-glutamate: step 2/2. In terms of biological role, catalyzes the NADPH-dependent reduction of L-glutamate 5-phosphate into L-glutamate 5-semialdehyde and phosphate. The product spontaneously undergoes cyclization to form 1-pyrroline-5-carboxylate. This is Gamma-glutamyl phosphate reductase from Brucella suis (strain ATCC 23445 / NCTC 10510).